Consider the following 420-residue polypeptide: Gamma-glutamyl phosphate reductase (420 aa).

The protein belongs to the gamma-glutamyl phosphate reductase family.

The protein localises to the cytoplasm. It carries out the reaction L-glutamate 5-semialdehyde + phosphate + NADP(+) = L-glutamyl 5-phosphate + NADPH + H(+). It functions in the pathway amino-acid biosynthesis; L-proline biosynthesis; L-glutamate 5-semialdehyde from L-glutamate: step 2/2. Its function is as follows. Catalyzes the NADPH-dependent reduction of L-glutamate 5-phosphate into L-glutamate 5-semialdehyde and phosphate. The product spontaneously undergoes cyclization to form 1-pyrroline-5-carboxylate. This is Gamma-glutamyl phosphate reductase from Streptococcus pneumoniae serotype 19F (strain G54).